A 351-amino-acid chain; its full sequence is Calcium release-activated calcium channel protein 1 (351 aa).

The span at 1–21 shows a compositional bias: polar residues; the sequence is MSVWTTANNSGLETPTKSPIT. Disordered regions lie at residues 1-39 and 71-141; these read MSVWTTANNSGLETPTKSPITSSVPRAARSSAVITTGNH and HAHP…EDLH. At 1-163 the chain is on the cytoplasmic side; sequence MSVWTTANNS…SRAKLKASSK (163 aa). Low complexity-rich tracts occupy residues 22–33 and 80–93; these read SSVPRAARSSAV and SNSPTGSGSNSNNS. The span at 94–106 shows a compositional bias: polar residues; it reads AGFQRTSISNSLL. Residues 164–181 form a helical membrane-spanning segment; the sequence is TSALLSGFAMVAMVEVQL. Over 182-191 the chain is Extracellular; it reads DHDTNVPPGM. The chain crosses the membrane as a helical span at residues 192 to 212; the sequence is LIAFAICTTLLVAVHMLALMI. The Cytoplasmic segment spans residues 213–248; it reads STCILPNIETVCNLHSISLVHESPHERLHWYIETAW. A helical membrane pass occupies residues 249-269; it reads AFSTLLGLILFLLEIAILCWV. The Extracellular portion of the chain corresponds to 270–277; it reads KFYDLSPP. A helical transmembrane segment spans residues 278–298; sequence AAWSACVVLIPVMIIFMAFAI. Topologically, residues 299–351 are cytoplasmic; sequence HFYRSLVSHKYEVTVSGIRELEMLKEQMEQDHLEHHNNIRNNGMNYGASGDIV.

This sequence belongs to the Orai family. Hexamer.

The protein resides in the cell membrane. It carries out the reaction Ca(2+)(in) = Ca(2+)(out). Functionally, pore-forming subunit of inward rectifying Ca(2+) release-activated Ca(2+) (CRAC) channels. Assembles in hexameric CRAC channels that mediate Ca(2+) influx upon depletion of endoplasmic reticulum Ca(2+) store and channel activation by Ca(2+) sensor Stim, a process known as store-operated Ca(2+) entry (SOCE). Regulates transcription factor NFAT nuclear import. This Drosophila melanogaster (Fruit fly) protein is Calcium release-activated calcium channel protein 1.